The sequence spans 444 residues: Chromosomal replication initiator protein DnaA (444 aa).

Positions 1–66 are domain I, interacts with DnaA modulators; it reads MKSEIIESLK…SKTLRELFGK (66 aa). A domain II region spans residues 66–100; the sequence is KPMDFRIEHASAKTEEKLDSNEDEPLVKKRPLILT. Residues 101 to 317 are domain III, AAA+ region; sequence PLNPILTFEN…GALVKLIMYQ (217 aa). Residues G144, G146, K147, and T148 each coordinate ATP. The segment at 318-444 is domain IV, binds dsDNA; that stretch reads QISGEKVDLQ…VTGQILDQSV (127 aa).

Belongs to the DnaA family. Oligomerizes as a right-handed, spiral filament on DNA at oriC.

It is found in the cytoplasm. Plays an essential role in the initiation and regulation of chromosomal replication. ATP-DnaA binds to the origin of replication (oriC) to initiate formation of the DNA replication initiation complex once per cell cycle. Binds the DnaA box (a 9 base pair repeat at the origin) and separates the double-stranded (ds)DNA. Forms a right-handed helical filament on oriC DNA; dsDNA binds to the exterior of the filament while single-stranded (ss)DNA is stabiized in the filament's interior. The ATP-DnaA-oriC complex binds and stabilizes one strand of the AT-rich DNA unwinding element (DUE), permitting loading of DNA polymerase. After initiation quickly degrades to an ADP-DnaA complex that is not apt for DNA replication. Binds acidic phospholipids. This is Chromosomal replication initiator protein DnaA from Pseudothermotoga lettingae (strain ATCC BAA-301 / DSM 14385 / NBRC 107922 / TMO) (Thermotoga lettingae).